Consider the following 305-residue polypeptide: Olfactory receptor 4F17 (305 aa).

The Extracellular segment spans residues 1–18 (MVTEFIFLGLSDSQGLQT). Residues 19–42 (FLFMLFFVFYGGIVFGNLLIVITV) form a helical membrane-spanning segment. Residues 43 to 50 (VSDSHLHS) are Cytoplasmic-facing. A helical membrane pass occupies residues 51 to 72 (PMYFLLANLSLIDLSLSSVTAP). Residues 73–93 (KMITDFFSQRKVISFKGCLVQ) are Extracellular-facing. Cys90 and Cys182 are joined by a disulfide. The helical transmembrane segment at 94-113 (IFLLHFFGGSEMVILIAMGF) threads the bilayer. Residues 114 to 132 (DRYIAICKPLHYTTIMCGN) lie on the Cytoplasmic side of the membrane. The chain crosses the membrane as a helical span at residues 133–151 (ACVGIMAVAWGIGFLHSVS). The Extracellular segment spans residues 152–188 (QLAFAVHLPFCGPNEVDSFYCDLPRVIKLACTDTYRL). A helical transmembrane segment spans residues 189 to 212 (DIMVIANSGVLTVCSFVLLIISYT). At 213–228 (IILMTIQHRPLDKSSK) the chain is on the cytoplasmic side. The helical transmembrane segment at 229 to 251 (ALSTLTAHITVVLLFFGPCVFIY) threads the bilayer. At 252–262 (AWPFPIKSLDK) the chain is on the extracellular side. Residues 263–282 (FLAVFYSVITPLLNPIIYTL) form a helical membrane-spanning segment. The Cytoplasmic portion of the chain corresponds to 283–305 (RNKDMKTAIRQLRKWDAHSSVKF).

This sequence belongs to the G-protein coupled receptor 1 family.

Its subcellular location is the cell membrane. Functionally, odorant receptor. The sequence is that of Olfactory receptor 4F17 (OR4F17) from Homo sapiens (Human).